A 201-amino-acid polypeptide reads, in one-letter code: Ribonuclease HII (201 aa).

One can recognise an RNase H type-2 domain in the interval 11-201 (LRECGCDEAG…VVDADRPTTE (191 aa)). Residues D17, E18, and D109 each contribute to the a divalent metal cation site.

This sequence belongs to the RNase HII family. Mn(2+) serves as cofactor. Mg(2+) is required as a cofactor.

The protein resides in the cytoplasm. It carries out the reaction Endonucleolytic cleavage to 5'-phosphomonoester.. Functionally, endonuclease that specifically degrades the RNA of RNA-DNA hybrids. This Porphyromonas gingivalis (strain ATCC BAA-308 / W83) protein is Ribonuclease HII (rnhB).